Reading from the N-terminus, the 457-residue chain is Glutamate--tRNA ligase 2 (457 aa).

The 'HIGH' region signature appears at 8–18 (PSPTGYIHIGN). The 'KMSKS' region motif lies at 249 to 253 (GFSKR). Residue Lys252 participates in ATP binding.

It belongs to the class-I aminoacyl-tRNA synthetase family. Glutamate--tRNA ligase type 1 subfamily. Monomer.

The protein localises to the cytoplasm. The enzyme catalyses tRNA(Glu) + L-glutamate + ATP = L-glutamyl-tRNA(Glu) + AMP + diphosphate. In terms of biological role, catalyzes the attachment of glutamate to tRNA(Glu) in a two-step reaction: glutamate is first activated by ATP to form Glu-AMP and then transferred to the acceptor end of tRNA(Glu). In Bartonella tribocorum (strain CIP 105476 / IBS 506), this protein is Glutamate--tRNA ligase 2.